The following is a 217-amino-acid chain: MNQTLLSSFGTSIERVEHALDALREGRGVMVLDDEHRENEGDMIFAAENMTVEQMALTIRHGSGIVCLCINEERRKQLDLPMMVENNTSAFGTGFTVTIEAAHGVTTGVSAADRLTTVRAAIADGAKPSDLHRPGHVFPLRAQAGGVLTRGGHTEATLDLVTLAGFKPAGVLCELTNDDGTMARAPECVTFARLHNMPVVTIEDLVEYRQAHERKAS.

D-ribulose 5-phosphate is bound by residues 37–38 (RE), D42, 150–154 (RGGHT), and E174. E38 is a binding site for Mg(2+). H153 serves as a coordination point for Mg(2+).

The protein belongs to the DHBP synthase family. Homodimer. The cofactor is Mg(2+). Mn(2+) serves as cofactor.

It catalyses the reaction D-ribulose 5-phosphate = (2S)-2-hydroxy-3-oxobutyl phosphate + formate + H(+). Its pathway is cofactor biosynthesis; riboflavin biosynthesis; 2-hydroxy-3-oxobutyl phosphate from D-ribulose 5-phosphate: step 1/1. Catalyzes the conversion of D-ribulose 5-phosphate to formate and 3,4-dihydroxy-2-butanone 4-phosphate. This Enterobacter sp. (strain 638) protein is 3,4-dihydroxy-2-butanone 4-phosphate synthase.